The sequence spans 154 residues: Myoglobin (154 aa).

One can recognise a Globin domain in the interval 2 to 148; sequence GLSDGEWQLV…FRKDIAAKYK (147 aa). Ser-4 is modified (phosphoserine). Residue His-65 coordinates nitrite. O2 is bound at residue His-65. Thr-68 carries the phosphothreonine modification. His-94 lines the heme b pocket.

It belongs to the globin family. In terms of assembly, monomeric.

Its subcellular location is the cytoplasm. It localises to the sarcoplasm. It catalyses the reaction Fe(III)-heme b-[protein] + nitric oxide + H2O = Fe(II)-heme b-[protein] + nitrite + 2 H(+). The catalysed reaction is H2O2 + AH2 = A + 2 H2O. Functionally, monomeric heme protein which primary function is to store oxygen and facilitate its diffusion within muscle tissues. Reversibly binds oxygen through a pentacoordinated heme iron and enables its timely and efficient release as needed during periods of heightened demand. Depending on the oxidative conditions of tissues and cells, and in addition to its ability to bind oxygen, it also has a nitrite reductase activity whereby it regulates the production of bioactive nitric oxide. Under stress conditions, like hypoxia and anoxia, it also protects cells against reactive oxygen species thanks to its pseudoperoxidase activity. The chain is Myoglobin (MB) from Globicephala melas (Long-finned pilot whale).